Reading from the N-terminus, the 339-residue chain is Phosphoribosylformylglycinamidine cyclo-ligase (339 aa).

This sequence belongs to the AIR synthase family.

The protein localises to the cytoplasm. The enzyme catalyses 2-formamido-N(1)-(5-O-phospho-beta-D-ribosyl)acetamidine + ATP = 5-amino-1-(5-phospho-beta-D-ribosyl)imidazole + ADP + phosphate + H(+). It functions in the pathway purine metabolism; IMP biosynthesis via de novo pathway; 5-amino-1-(5-phospho-D-ribosyl)imidazole from N(2)-formyl-N(1)-(5-phospho-D-ribosyl)glycinamide: step 2/2. This is Phosphoribosylformylglycinamidine cyclo-ligase from Oceanobacillus iheyensis (strain DSM 14371 / CIP 107618 / JCM 11309 / KCTC 3954 / HTE831).